We begin with the raw amino-acid sequence, 333 residues long: Type II secretion system protein K (333 aa).

The propeptide at 1–7 (MRRGQNG) is leader sequence. A helical membrane pass occupies residues 8–29 (VALITVLLVVAVVTIVCAGLII). The Periplasmic portion of the chain corresponds to 30–333 (RQQLAIRSSA…GGDDWKKDER (304 aa)). Positions 313–333 (MGQGGLPIPSTGGDDWKKDER) are disordered.

The protein belongs to the GSP K family. As to quaternary structure, type II secretion is composed of four main components: the outer membrane complex, the inner membrane complex, the cytoplasmic secretion ATPase and the periplasm-spanning pseudopilus. Interacts with the tip of the type II pseudopilus subunits XcpV, XcpU and XcpW. Interacts with core component XcpT. Post-translationally, cleaved by prepilin peptidase.

It is found in the cell inner membrane. Its function is as follows. Component of the type II secretion system required for the energy-dependent secretion of extracellular factors such as proteases and toxins from the periplasm. Plays a role in pseudopilus assembly and seems to control its length. Interacts with the pseudopilus tip complex that is critical for the recognition and binding of secretion substrates. Type II pseudopilus confers increased bacterial adhesive capabilities. This chain is Type II secretion system protein K (xcpX), found in Pseudomonas aeruginosa (strain ATCC 15692 / DSM 22644 / CIP 104116 / JCM 14847 / LMG 12228 / 1C / PRS 101 / PAO1).